The chain runs to 410 residues: CinA-like protein (410 aa).

This sequence belongs to the CinA family.

This Anaeromyxobacter sp. (strain Fw109-5) protein is CinA-like protein.